Here is an 815-residue protein sequence, read N- to C-terminus: Phenylalanine--tRNA ligase beta subunit (815 aa).

In terms of domain architecture, tRNA-binding spans 40–155; the sequence is APPFDKIVVA…EDAPVGQNIR (116 aa). Positions 406–485 constitute a B5 domain; the sequence is PQRRPVSLRL…RIYGFERIAA (80 aa). Residues aspartate 463, aspartate 469, glutamate 472, and glutamate 473 each contribute to the Mg(2+) site. The region spanning 712–814 is the FDX-ACB domain; that stretch reads SKFPAAVRDL…LGEAFQARLR (103 aa).

It belongs to the phenylalanyl-tRNA synthetase beta subunit family. Type 1 subfamily. Tetramer of two alpha and two beta subunits. Mg(2+) is required as a cofactor.

The protein localises to the cytoplasm. The catalysed reaction is tRNA(Phe) + L-phenylalanine + ATP = L-phenylalanyl-tRNA(Phe) + AMP + diphosphate + H(+). In Cupriavidus pinatubonensis (strain JMP 134 / LMG 1197) (Cupriavidus necator (strain JMP 134)), this protein is Phenylalanine--tRNA ligase beta subunit.